The primary structure comprises 87 residues: Small ribosomal subunit protein uS17 (87 aa).

Belongs to the universal ribosomal protein uS17 family. In terms of assembly, part of the 30S ribosomal subunit.

Its function is as follows. One of the primary rRNA binding proteins, it binds specifically to the 5'-end of 16S ribosomal RNA. This is Small ribosomal subunit protein uS17 from Endomicrobium trichonymphae.